A 1332-amino-acid chain; its full sequence is Abscisic-aldehyde oxidase (1332 aa).

Residues 1 to 88 (MDLEFAVNGE…GCSITTSEGL (88 aa)) form the 2Fe-2S ferredoxin-type domain. The [2Fe-2S] cluster site is built by C40, C45, and C48. Positions 219 to 400 (SDHLKYRWTT…LKVEIPSWTA (182 aa)) constitute an FAD-binding PCMH-type domain.

It belongs to the xanthine dehydrogenase family. Aldehyde oxidases (AO) are homodimers and heterodimers of AO subunits. AO-delta is a AAO3 homodimer. AAO3 also forms a dimer with AAO2. Interacts with PUB44, and this interaction probably results in targeting of this protein to the proteasome. Requires [2Fe-2S] cluster as cofactor. It depends on FAD as a cofactor. Mo-molybdopterin serves as cofactor. As to expression, expressed in vascular tissues of all organs, particularly in phloem companion cells and xylem parenchymatic cells. Highly expressed in roots and rosettes, and to lower extent in seedlings, stems and flowers. Expressed at very low levels in siliques and dry seeds. Also detected in root dividing cells (tips and primordia), in mesophyll cells and inside the guard cells.

It localises to the cytoplasm. It carries out the reaction 2-cis-(+)-abscisic aldehyde + O2 + H2O = 2-cis-(+)-abscisate + H2O2 + H(+). It catalyses the reaction 1-naphthaldehyde + O2 + H2O = 1-naphthoate + H2O2 + H(+). The catalysed reaction is indole-3-acetaldehyde + O2 + H2O = (indol-3-yl)acetate + H2O2 + H(+). Functionally, in higher plants aldehyde oxidases (AO) appear to be homo- and heterodimeric assemblies of AO subunits with probably different physiological functions. AO-delta may be involved in the last step of abscisic acid biosynthesis, at least in leaves and seeds. In vitro, AO-delta oxidizes abscisic aldehyde to abscisic acid (ABA). In vitro, AO-delta also uses 1-naphthaldehyde, indole-3-aldehyde (IAld), benzaldehyde and cinnamaldehyde as substrate; the AAO2-AAO3 dimer also uses abscisic aldehyde as substrate. In Arabidopsis thaliana (Mouse-ear cress), this protein is Abscisic-aldehyde oxidase (AAO3).